The sequence spans 201 residues: Charged multivesicular body protein 6 (201 aa).

The N-myristoyl glycine moiety is linked to residue G2. A coiled-coil region spans residues 10–145 (QSRVTEQDKA…YQRQIDELLA (136 aa)). S119 is modified (phosphoserine). The residue at position 130 (T130) is a Phosphothreonine. The Type-2 MIT-interacting motif motif lies at 168–179 (IELPEVPSEPLP). Residues 170-181 (LPEVPSEPLPEK) form an interaction with VPS4A region.

Belongs to the SNF7 family. Probable core component of the endosomal sorting required for transport complex III (ESCRT-III). ESCRT-III components are thought to multimerize to form a flat lattice on the perimeter membrane of the endosome. Several assembly forms of ESCRT-III may exist that interact and act sequentially. Interacts with VPS4A; the interaction is direct. Interacts with VPS4B; the interaction is direct. Interacts with CHMP4A, CHMP4B and CHMP4C. Interacts with SNF8, VPS25 and VPS36. Post-translationally, ISGylated in a CHMP5-dependent manner. Isgylation weakens its interaction with VPS4A. In terms of tissue distribution, ubiquitously expressed.

The protein localises to the endomembrane system. It is found in the endosome membrane. The protein resides in the late endosome membrane. Its subcellular location is the membrane. Functionally, probable core component of the endosomal sorting required for transport complex III (ESCRT-III) which is involved in multivesicular bodies (MVBs) formation and sorting of endosomal cargo proteins into MVBs. MVBs contain intraluminal vesicles (ILVs) that are generated by invagination and scission from the limiting membrane of the endosome and mostly are delivered to lysosomes enabling degradation of membrane proteins, such as stimulated growth factor receptors, lysosomal enzymes and lipids. The MVB pathway appears to require the sequential function of ESCRT-O, -I,-II and -III complexes. ESCRT-III proteins mostly dissociate from the invaginating membrane before the ILV is released. The ESCRT machinery also functions in topologically equivalent membrane fission events, such as the terminal stages of cytokinesis and the budding of enveloped viruses (HIV-1 and other lentiviruses). ESCRT-III proteins are believed to mediate the necessary vesicle extrusion and/or membrane fission activities, possibly in conjunction with the AAA ATPase VPS4. In the ESCRT-III complex, it probably serves as an acceptor for the ESCRT-II complex on endosomal membranes. This Homo sapiens (Human) protein is Charged multivesicular body protein 6 (CHMP6).